The following is a 581-amino-acid chain: Zinc finger protein 674 (581 aa).

The KRAB domain maps to 8–79; the sequence is LTFKDVFVDF…DGGTPVRTCA (72 aa). 4 C2H2-type zinc fingers span residues 224–246, 252–274, 280–302, and 308–330; these read YKCT…QRTH, YECC…QRTH, YECS…QRTH, and FVCD…EKTH. Over residues 357–371 the composition is skewed to basic and acidic residues; the sequence is PQCSEHGKASDEKPS. A disordered region spans residues 357–377; sequence PQCSEHGKASDEKPSPTKHWR. 7 consecutive C2H2-type zinc fingers follow at residues 385–407, 413–435, 441–463, 469–491, 497–519, 525–547, and 553–575; these read YECS…QRIH, YECS…HRTH, YECR…QRMH, YKCN…QRIH, YECT…QRIH, YKCS…HRTH, and YECR…QRSH.

The protein belongs to the krueppel C2H2-type zinc-finger protein family. As to expression, expressed in testis.

Its subcellular location is the nucleus. Its function is as follows. May be involved in transcriptional regulation. The sequence is that of Zinc finger protein 674 (ZNF674) from Homo sapiens (Human).